Here is a 691-residue protein sequence, read N- to C-terminus: Threonine--tRNA ligase (691 aa).

The region spanning 1–69 (MSTPEITPAA…QQDVEVAAVP (69 aa)) is the TGS domain. Residues 268-574 (DHRRLGQELD…LLEHYAGAFP (307 aa)) form a catalytic region. Zn(2+) contacts are provided by Cys-373, His-424, and His-551.

The protein belongs to the class-II aminoacyl-tRNA synthetase family. As to quaternary structure, homodimer. The cofactor is Zn(2+).

It is found in the cytoplasm. The enzyme catalyses tRNA(Thr) + L-threonine + ATP = L-threonyl-tRNA(Thr) + AMP + diphosphate + H(+). In terms of biological role, catalyzes the attachment of threonine to tRNA(Thr) in a two-step reaction: L-threonine is first activated by ATP to form Thr-AMP and then transferred to the acceptor end of tRNA(Thr). Also edits incorrectly charged L-seryl-tRNA(Thr). This chain is Threonine--tRNA ligase, found in Corynebacterium jeikeium (strain K411).